The chain runs to 384 residues: Beta-lactamase (384 aa).

The N-terminal stretch at Met1–Ala29 is a signal peptide. Ser87 (acyl-ester intermediate) is an active-site residue. Residue Tyr172 is the Proton acceptor of the active site. Lys337–Gly339 contacts substrate.

It belongs to the class-C beta-lactamase family.

The protein resides in the periplasm. The catalysed reaction is a beta-lactam + H2O = a substituted beta-amino acid. In terms of biological role, this protein is a serine beta-lactamase with a substrate specificity for cephalosporins. This is Beta-lactamase (ampC) from Providencia stuartii.